A 521-amino-acid polypeptide reads, in one-letter code: Proactivator polypeptide-like 1 (521 aa).

An N-terminal signal peptide occupies residues 1–17 (MLCALLLLPSLLGATRA). Positions 18 to 59 (SPTSGPQECAKGSTVWCQDLQTAARCGAVGYCQGAVWNKPTA) are excised as a propeptide. In terms of domain architecture, Saposin A-type 1 spans 19–59 (PTSGPQECAKGSTVWCQDLQTAARCGAVGYCQGAVWNKPTA). Saposin B-type domains lie at 60-144 (KSLP…EPLQ) and 180-258 (EGAL…EELG). Cystine bridges form between C64–C140, C67–C134, and C95–C107. The propeptide occupies 146-180 (HLATLRPLSKEDTFEAVAPFMANGPLTFHPRQAPE). 3 disulfides stabilise this stretch: C184-C254, C187-C248, and C213-C224. A glycan (N-linked (GlcNAc...) asparagine) is linked at N201. Residues 259 to 288 (APARLTQVVAMDGVPSLELGLPRKQSEMQM) constitute a propeptide that is removed on maturation. 2 consecutive Saposin B-type domains span residues 290-370 (AGVT…GNRR) and 392-473 (QGSF…HGPR). 3 cysteine pairs are disulfide-bonded: C294-C366, C297-C360, and C325-C336. N311 is a glycosylation site (N-linked (GlcNAc...) asparagine). Residues 370–391 (RRARAVHDAYAIVPSPEWDAEN) constitute a propeptide that is removed on maturation. Intrachain disulfides connect C396–C469, C399–C463, and C427–C438. Residues 474 to 521 (TPLLGTDQCALGPSFWCRSQEAAKLCNAVQHCQKHVWKEMHLHAGEHA) constitute a propeptide that is removed on maturation. Residues 475-515 (PLLGTDQCALGPSFWCRSQEAAKLCNAVQHCQKHVWKEMHL) form the Saposin A-type 2 domain.

The protein resides in the secreted. In terms of biological role, may activate the lysosomal degradation of sphingolipids. The chain is Proactivator polypeptide-like 1 (PSAPL1) from Homo sapiens (Human).